The primary structure comprises 348 residues: Calcium homeostasis modulator protein 1 (348 aa).

The Cytoplasmic segment spans residues 1-20 (MDKFRMIFQFLQSNQESFMN). Residues 9-36 (QFLQSNQESFMNGICGIMALASAQMYSA) form a central pore region. A helical transmembrane segment spans residues 21 to 36 (GICGIMALASAQMYSA). Topologically, residues 37–48 (FDFNCPCLPGYN) are extracellular. Disulfide bonds link cysteine 41–cysteine 126 and cysteine 43–cysteine 160. Residues 49 to 71 (VVYSLGILLTPPLVLFLLGLVMN) form a helical membrane-spanning segment. The segment at 62–69 (VLFLLGLV) is phospholipid-binding. At 72-98 (NNISMLAEEWKRPAGRRAKDPAVLRYM) the chain is on the cytoplasmic side. Residues 99-124 (FCSMAQRALIAPVVWVAVTLLDGKCF) form a helical membrane-spanning segment. Cysteine 100 carries the S-palmitoyl cysteine lipid modification. A phospholipid-binding region spans residues 104–116 (QRALIAPVVWVAV). At 125-179 (LCAFCTAVPVATLGNGSLVPGLPAPELARLLARVPCPEIYDGNWLLAREVAVRYL) the chain is on the extracellular side. A glycan (N-linked (GlcNAc...) asparagine) is linked at asparagine 139. Residues 180–205 (RCISQALGWSFVLLTTLLAFVVRSVR) traverse the membrane as a helical segment. The segment at 191–201 (VLLTTLLAFVV) is phospholipid-binding. Over 206–348 (PCFTQVAFLK…KEVATYFSKV (143 aa)) the chain is Cytoplasmic. Cysteine 207 carries S-palmitoyl cysteine lipidation. The disordered stretch occupies residues 324-348 (LMSNGWAGGEPRPPRKEVATYFSKV).

Belongs to the CALHM family. Oligomerizes to form hexamers and octamers. Does not form gap junctions. Associates with CALHM3 as a pore-forming subunit in a hetero-hexameric channel complex. Post-translationally, N-glycosylated. Assembly with CALHM3 is associated with N-glycan remodeling and formation of hybrid complex- and high mannose-type glycochains. This N-glycan processing regulates channel trafficking and gating kinetics. In terms of processing, palmitoylated by ZDHHC3, ZDHHC20 and possibly ZDHHC7. Palmitoylation regulates voltage-dependent gating of the channel by shifting it toward more depolarized potentials. In terms of tissue distribution, specifically expressed in type II taste bud cells (at protein level). Not expressed in brain.

The protein localises to the cell membrane. The protein resides in the endoplasmic reticulum membrane. Its subcellular location is the basolateral cell membrane. It carries out the reaction ATP(in) = ATP(out). The enzyme catalyses Ca(2+)(in) = Ca(2+)(out). It catalyses the reaction Mg(2+)(in) = Mg(2+)(out). The catalysed reaction is Na(+)(in) = Na(+)(out). It carries out the reaction K(+)(in) = K(+)(out). The enzyme catalyses Li(+)(in) = Li(+)(out). It catalyses the reaction Rb(+)(in) = Rb(+)(out). The catalysed reaction is Cs(+)(in) = Cs(+)(out). It carries out the reaction chloride(in) = chloride(out). Regulated by membrane voltage and extracellular Ca(2+). Inhibited by Gd(3+), ruthenium red, and Zn(2+) and partially inhibited by 2-aminoethoxydiphenyl borate. Pore-forming subunit of gustatory voltage-gated ion channels required for sensory perception of sweet, bitter and umami tastes. With CALHM3 forms a fast-activating voltage-gated ATP-release channel in type II taste bud cells, ATP acting as a neurotransmitter to activate afferent neural gustatory pathways. Acts both as a voltage-gated and calcium-activated ion channel: mediates neuronal excitability in response to membrane depolarization and low extracellular Ca(2+) concentration. Has poor ion selectivity and forms a wide pore (around 14 Angstroms) that mediates permeation of small ions including Ca(2+), Na(+), K(+) and Cl(-), as well as larger ions such as ATP(4-). Mediates Ca(2+) influx and downstream activation of the ERK1 and ERK2 cascade in neurons. Triggers endoplasmic reticulum stress by reducing the calcium content of the endoplasmic reticulum. May indirectly control amyloid precursor protein (APP) proteolysis and aggregated amyloid-beta (Abeta) peptides levels in a Ca(2+) dependent manner. This is Calcium homeostasis modulator protein 1 from Mus musculus (Mouse).